The following is a 289-amino-acid chain: 4-diphosphocytidyl-2-C-methyl-D-erythritol kinase (289 aa).

The active site involves Lys10. Position 94-104 (94-104 (PVAAGLAGGSS)) interacts with ATP. Asp136 is a catalytic residue.

Belongs to the GHMP kinase family. IspE subfamily.

The enzyme catalyses 4-CDP-2-C-methyl-D-erythritol + ATP = 4-CDP-2-C-methyl-D-erythritol 2-phosphate + ADP + H(+). It participates in isoprenoid biosynthesis; isopentenyl diphosphate biosynthesis via DXP pathway; isopentenyl diphosphate from 1-deoxy-D-xylulose 5-phosphate: step 3/6. Its function is as follows. Catalyzes the phosphorylation of the position 2 hydroxy group of 4-diphosphocytidyl-2C-methyl-D-erythritol. The chain is 4-diphosphocytidyl-2-C-methyl-D-erythritol kinase from Bacillus mycoides (strain KBAB4) (Bacillus weihenstephanensis).